The chain runs to 147 residues: 6-pyruvoyl tetrahydrobiopterin synthase (147 aa).

Histidine 26 provides a ligand contact to Zn(2+). Residue cysteine 45 is the Proton acceptor of the active site. Zn(2+) contacts are provided by histidine 51 and histidine 53. Residues histidine 92 and glutamate 136 each act as charge relay system in the active site.

It belongs to the PTPS family. Homohexamer formed of two homotrimers in a head to head fashion. It depends on Zn(2+) as a cofactor.

It carries out the reaction 7,8-dihydroneopterin 3'-triphosphate = 6-pyruvoyl-5,6,7,8-tetrahydropterin + triphosphate + H(+). It functions in the pathway cofactor biosynthesis; tetrahydrobiopterin biosynthesis; tetrahydrobiopterin from 7,8-dihydroneopterin triphosphate: step 1/3. Its function is as follows. Involved in the biosynthesis of tetrahydrobiopterin, an essential cofactor of aromatic amino acid hydroxylases. Catalyzes the transformation of 7,8-dihydroneopterin triphosphate into 6-pyruvoyl tetrahydropterin. The chain is 6-pyruvoyl tetrahydrobiopterin synthase (pts) from Poecilia reticulata (Guppy).